The sequence spans 254 residues: Phosphomannomutase (254 aa).

D16 serves as the catalytic Nucleophile. 2 residues coordinate Mg(2+): D16 and D18. D18 serves as the catalytic Proton donor/acceptor. Residues R25, R129, R140, R147, S185, and D187 each contribute to the alpha-D-mannose 1-phosphate site. Mg(2+) contacts are provided by D216, Y228, D230, and T233.

The protein belongs to the eukaryotic PMM family. In terms of assembly, homodimer.

The protein resides in the cytoplasm. It carries out the reaction alpha-D-mannose 1-phosphate = D-mannose 6-phosphate. The protein operates within nucleotide-sugar biosynthesis; GDP-alpha-D-mannose biosynthesis; alpha-D-mannose 1-phosphate from D-fructose 6-phosphate: step 2/2. Its function is as follows. Involved in the synthesis of the GDP-mannose and dolichol-phosphate-mannose required for a number of critical mannosyl transfer reactions. Required for maintaining N-linked glycoprotein glycosylation at the neuromuscular junction (NMJ) synaptomatrix, and thus acts in multiple pathways that prevent NMJ structural overgrowth, restrict synaptic bouton differentiation, and limit NMJ neurotransmission strength, in order to maintain viability, coordinate movement, and in adults ensure correct wing positioning. Acts in the NMJ trans-synaptic Wg pathway via glycosylation of synaptic Mmp2 which enables dlp/wg signaling during development. The chain is Phosphomannomutase from Drosophila melanogaster (Fruit fly).